A 438-amino-acid chain; its full sequence is Serine carboxypeptidase-like 5 (438 aa).

A signal peptide spans 1-28 (MANYISSVLKSLLLLLHLVFLIQQHVDS). 3 disulfide bridges follow: Cys87–Cys328, Cys251–Cys263, and Cys287–Cys294. N-linked (GlcNAc...) asparagine glycosylation is present at Asn108. Residue Ser183 is part of the active site. A glycan (N-linked (GlcNAc...) asparagine) is linked at Asn347. The active site involves Asp363. Asn379 carries N-linked (GlcNAc...) asparagine glycosylation. Residue His416 is part of the active site.

This sequence belongs to the peptidase S10 family. In terms of tissue distribution, expressed in seedlings, roots, and siliques.

The protein localises to the secreted. Probable carboxypeptidase. The chain is Serine carboxypeptidase-like 5 (SCPL5) from Arabidopsis thaliana (Mouse-ear cress).